Reading from the N-terminus, the 76-residue chain is uncharacterized protein (76 aa).

A helical membrane pass occupies residues 24 to 44; the sequence is GAIFLVCYPLYCVVCFVSVLC.

It is found in the membrane. This is an uncharacterized protein from Schizosaccharomyces pombe (strain 972 / ATCC 24843) (Fission yeast).